The following is a 98-amino-acid chain: Integration host factor subunit alpha (98 aa).

A disordered region spans residues phenylalanine 49–isoleucine 71.

Belongs to the bacterial histone-like protein family. In terms of assembly, heterodimer of an alpha and a beta chain.

In terms of biological role, this protein is one of the two subunits of integration host factor, a specific DNA-binding protein that functions in genetic recombination as well as in transcriptional and translational control. In Shewanella sp. (strain ANA-3), this protein is Integration host factor subunit alpha.